A 367-amino-acid chain; its full sequence is DNA replication and repair protein RecF (367 aa).

30 to 37 contributes to the ATP binding site; it reads GANGSGKT.

The protein belongs to the RecF family.

The protein resides in the cytoplasm. The RecF protein is involved in DNA metabolism; it is required for DNA replication and normal SOS inducibility. RecF binds preferentially to single-stranded, linear DNA. It also seems to bind ATP. This is DNA replication and repair protein RecF from Pseudomonas syringae pv. syringae (strain B728a).